Here is an 81-residue protein sequence, read N- to C-terminus: Short neurotoxin 2 (81 aa).

The N-terminal stretch at 1-21 is a signal peptide; it reads MKTLLLTLVVVTIVCLDLGYT. 4 disulfides stabilise this stretch: cysteine 24/cysteine 43, cysteine 38/cysteine 60, cysteine 62/cysteine 73, and cysteine 74/cysteine 79.

This sequence belongs to the three-finger toxin family. Short-chain subfamily. Type I alpha-neurotoxin sub-subfamily. As to expression, expressed by the venom gland.

The protein resides in the secreted. Its function is as follows. Binds to muscle nicotinic acetylcholine receptor (nAChR) and inhibit acetylcholine from binding to the receptor, thereby impairing neuromuscular transmission. In Hydrophis hardwickii (Hardwick's spine-bellied seasnake), this protein is Short neurotoxin 2.